A 313-amino-acid chain; its full sequence is Ribosomal RNA small subunit methyltransferase H (313 aa).

S-adenosyl-L-methionine-binding positions include 35–37 (GGH), Asp55, Phe80, Asp102, and Gln109.

This sequence belongs to the methyltransferase superfamily. RsmH family.

It localises to the cytoplasm. The enzyme catalyses cytidine(1402) in 16S rRNA + S-adenosyl-L-methionine = N(4)-methylcytidine(1402) in 16S rRNA + S-adenosyl-L-homocysteine + H(+). Its function is as follows. Specifically methylates the N4 position of cytidine in position 1402 (C1402) of 16S rRNA. This is Ribosomal RNA small subunit methyltransferase H from Shewanella sp. (strain MR-7).